We begin with the raw amino-acid sequence, 168 residues long: S-ribosylhomocysteine lyase (168 aa).

3 residues coordinate Fe cation: His54, His58, and Cys128.

Belongs to the LuxS family. In terms of assembly, homodimer. Fe cation serves as cofactor.

The catalysed reaction is S-(5-deoxy-D-ribos-5-yl)-L-homocysteine = (S)-4,5-dihydroxypentane-2,3-dione + L-homocysteine. In terms of biological role, involved in the synthesis of autoinducer 2 (AI-2) which is secreted by bacteria and is used to communicate both the cell density and the metabolic potential of the environment. The regulation of gene expression in response to changes in cell density is called quorum sensing. Catalyzes the transformation of S-ribosylhomocysteine (RHC) to homocysteine (HC) and 4,5-dihydroxy-2,3-pentadione (DPD). This Neisseria meningitidis serogroup C (strain 053442) protein is S-ribosylhomocysteine lyase.